The chain runs to 234 residues: Phosphoribosylaminoimidazole-succinocarboxamide synthase (234 aa).

It belongs to the SAICAR synthetase family.

It carries out the reaction 5-amino-1-(5-phospho-D-ribosyl)imidazole-4-carboxylate + L-aspartate + ATP = (2S)-2-[5-amino-1-(5-phospho-beta-D-ribosyl)imidazole-4-carboxamido]succinate + ADP + phosphate + 2 H(+). It functions in the pathway purine metabolism; IMP biosynthesis via de novo pathway; 5-amino-1-(5-phospho-D-ribosyl)imidazole-4-carboxamide from 5-amino-1-(5-phospho-D-ribosyl)imidazole-4-carboxylate: step 1/2. The chain is Phosphoribosylaminoimidazole-succinocarboxamide synthase from Exiguobacterium sp. (strain ATCC BAA-1283 / AT1b).